The primary structure comprises 905 residues: Methionine--tRNA ligase, cytoplasmic (905 aa).

Residues 1-75 form the GST N-terminal domain; the sequence is MKLFVGEGNP…YFYLSSGHDM (75 aa). A GST C-terminal domain is found at 72-199; it reads GHDMCDLSNQ…DKGSSVFKPF (128 aa). A 'HIGH' region motif is present at residues 271 to 281; sequence PYVNNVPHLGN. Residues 591 to 595 carry the 'KMSKS' region motif; sequence KFSKS. Position 594 (Lys-594) interacts with ATP. 2 disordered regions span residues 813-874 and 886-905; these read RFGG…VIDP and LALAEGKSPDPPTQKGKKKK. Positions 841-874 are enriched in basic and acidic residues; that stretch reads GPERVKELMQELEKQGNHVRELKGKKAEKSVIDP. A WHEP-TRS domain is found at 844–900; it reads RVKELMQELEKQGNHVRELKGKKAEKSVIDPEVQKLLALKKELALAEGKSPDPPTQK.

Belongs to the class-I aminoacyl-tRNA synthetase family. In terms of assembly, monomer. Part of a multisubunit complex that groups tRNA ligases for Arg (RARS1), Asp (DARS1), Gln (QARS1), Ile (IARS1), Leu (LARS1), Lys (KARS1), Met (MARS1) the bifunctional ligase for Glu and Pro (EPRS1) and the auxiliary subunits AIMP1/p43, AIMP2/p38 and EEF1E1/p18.

The protein resides in the cytoplasm. It is found in the cytosol. The protein localises to the nucleus. It localises to the nucleolus. It catalyses the reaction tRNA(Met) + L-methionine + ATP = L-methionyl-tRNA(Met) + AMP + diphosphate. Functionally, catalyzes the specific attachment of an amino acid to its cognate tRNA in a 2 step reaction: the amino acid (AA) is first activated by ATP to form AA-AMP and then transferred to the acceptor end of the tRNA. Plays a role in the synthesis of ribosomal RNA in the nucleolus. The polypeptide is Methionine--tRNA ligase, cytoplasmic (mars1) (Xenopus laevis (African clawed frog)).